Consider the following 103-residue polypeptide: Acyl carrier protein (103 aa).

Positions 14-89 constitute a Carrier domain; it reads NIVSNIVQDI…EFIDFTLQTI (76 aa). Residue Ser-49 is modified to O-(pantetheine 4'-phosphoryl)serine.

It belongs to the acyl carrier protein (ACP) family. Post-translationally, 4'-phosphopantetheine is transferred from CoA to a specific serine of apo-ACP by AcpS. This modification is essential for activity because fatty acids are bound in thioester linkage to the sulfhydryl of the prosthetic group.

Its subcellular location is the plastid. It localises to the cyanelle. It participates in lipid metabolism; fatty acid biosynthesis. Carrier of the growing fatty acid chain in fatty acid biosynthesis. The polypeptide is Acyl carrier protein (Cyanophora paradoxa).